We begin with the raw amino-acid sequence, 554 residues long: CTP synthase (554 aa).

The tract at residues 1–265 (MTPLIFVTGG…DEIVVNQLKL (265 aa)) is amidoligase domain. Ser13 contacts CTP. Position 13 (Ser13) interacts with UTP. Residues 14–19 (SLGKGI) and Asp71 contribute to the ATP site. Mg(2+) is bound by residues Asp71 and Glu139. Residues 146 to 148 (DIE), 186 to 191 (KTKPTQ), and Lys222 contribute to the CTP site. UTP is bound by residues 186 to 191 (KTKPTQ) and Lys222. The region spanning 292-545 (TIAVVGKYVD…IRAARERKAG (254 aa)) is the Glutamine amidotransferase type-1 domain. Residue Gly353 participates in L-glutamine binding. Cys380 acts as the Nucleophile; for glutamine hydrolysis in catalysis. L-glutamine-binding positions include 381–384 (YGMQ), Glu404, and Arg471. Active-site residues include His518 and Glu520.

This sequence belongs to the CTP synthase family. Homotetramer.

The catalysed reaction is UTP + L-glutamine + ATP + H2O = CTP + L-glutamate + ADP + phosphate + 2 H(+). It catalyses the reaction L-glutamine + H2O = L-glutamate + NH4(+). It carries out the reaction UTP + NH4(+) + ATP = CTP + ADP + phosphate + 2 H(+). It functions in the pathway pyrimidine metabolism; CTP biosynthesis via de novo pathway; CTP from UDP: step 2/2. Allosterically activated by GTP, when glutamine is the substrate; GTP has no effect on the reaction when ammonia is the substrate. The allosteric effector GTP functions by stabilizing the protein conformation that binds the tetrahedral intermediate(s) formed during glutamine hydrolysis. Inhibited by the product CTP, via allosteric rather than competitive inhibition. Its function is as follows. Catalyzes the ATP-dependent amination of UTP to CTP with either L-glutamine or ammonia as the source of nitrogen. Regulates intracellular CTP levels through interactions with the four ribonucleotide triphosphates. This chain is CTP synthase, found in Stenotrophomonas maltophilia (strain R551-3).